The chain runs to 583 residues: PTS system lactose-specific EIICB component (583 aa).

Positions 8-409 (IEKGKPFFEK…VVDVMIYYPF (402 aa)) constitute a PTS EIIC type-3 domain. The next 9 helical transmembrane spans lie at 30-50 (GFIA…ITYV), 64-84 (GILM…VAGT), 103-123 (INFI…AADP), 137-157 (KGLL…NFFI), 176-196 (VFKD…LDLL), 222-242 (GWIG…VGIH), 283-303 (FVAT…FMWL), 339-359 (VFFI…KFFV), and 381-401 (IVMG…LIVV). The segment covering 453 to 462 (ANETTTTESA) has biased composition (low complexity). Positions 453-475 (ANETTTTESAPSDEEVSAKNSSN) are disordered. Positions 480 to 583 (QTNVLVLCAG…LDFVQQQFEK (104 aa)) constitute a PTS EIIB type-3 domain. Cys487 (phosphocysteine intermediate; for EIIB activity) is an active-site residue. Cys487 bears the Phosphocysteine; by EIIA mark.

The protein localises to the cell membrane. The enzyme catalyses lactose(out) + N(pros)-phospho-L-histidyl-[protein] = lactose 6-phosphate(in) + L-histidyl-[protein]. Functionally, the phosphoenolpyruvate-dependent sugar phosphotransferase system (sugar PTS), a major carbohydrate active transport system, catalyzes the phosphorylation of incoming sugar substrates concomitantly with their translocation across the cell membrane. The enzyme II LacEF PTS system is involved in lactose transport. This chain is PTS system lactose-specific EIICB component, found in Staphylococcus haemolyticus (strain JCSC1435).